A 322-amino-acid chain; its full sequence is Putative nickel/cobalt efflux system HI_1248 (322 aa).

6 helical membrane-spanning segments follow: residues 7–27 (GLVL…WFFL), 54–74 (AGTT…LGPG), 100–120 (LSSL…VVVL), 137–157 (TALL…LRAY), 228–248 (IFVL…LAVL), and 294–314 (LIAG…TTIS).

It belongs to the NiCoT transporter (TC 2.A.52) family.

It localises to the cell membrane. Efflux system for nickel and cobalt. The sequence is that of Putative nickel/cobalt efflux system HI_1248 from Haemophilus influenzae (strain ATCC 51907 / DSM 11121 / KW20 / Rd).